We begin with the raw amino-acid sequence, 139 residues long: Myosin light chain kinase, smooth muscle (139 aa).

The segment at 48 to 97 is disordered; the sequence is APTGENAKAPEMKARRPKSSLPPVLGTESDATVKKKPAPKTPPKAAMPPQ.

This sequence belongs to the protein kinase superfamily. CAMK Ser/Thr protein kinase family. In terms of assembly, interacts with SVIL. The C-terminus is deglutamylated by AGTPBP1/CCP1, AGBL1/CCP4 and AGBL4/CCP6, leading to the formation of Myosin light chain kinase, smooth muscle, deglutamylated form. The consequences of C-terminal deglutamylation are unknown.

The catalysed reaction is L-seryl-[myosin light chain] + ATP = O-phospho-L-seryl-[myosin light chain] + ADP + H(+). It catalyses the reaction L-threonyl-[myosin light chain] + ATP = O-phospho-L-threonyl-[myosin light chain] + ADP + H(+). Functionally, phosphorylates a specific serine in the N-terminus of a myosin light chain. Also regulates actin-myosin interaction through a non-kinase activity. The protein is Myosin light chain kinase, smooth muscle (MYLK) of Sus scrofa (Pig).